Here is a 481-residue protein sequence, read N- to C-terminus: uncharacterized protein (481 aa).

13 helical membrane-spanning segments follow: residues 3–23, 33–53, 75–95, 99–119, 122–142, 155–175, 196–216, 241–261, 264–284, 303–323, 351–371, 400–420, and 443–463; these read YLPM…LLHG, FITA…YYYF, QAII…GMGE, NNMF…IVLA, IFNL…LVFL, YMIM…FLLA, IYGG…LPPF, FVLV…DYFA, HAVL…MALL, VATG…FHAI, GGLL…KLAI, IIMI…FYLI, and VFSL…PDIV.

It localises to the cell membrane. This is an uncharacterized protein from Methanocaldococcus jannaschii (strain ATCC 43067 / DSM 2661 / JAL-1 / JCM 10045 / NBRC 100440) (Methanococcus jannaschii).